The primary structure comprises 225 residues: MKLFVGLGNPGARYAGNRHNIGYMAVEAIAADHGFGPWRARFQGLTSEGRLGSEQVLLLKPETFMNLSGQSVGEAMRFYKLTPADVIVFHDELDLAPGKLRLKQGGGHAGHNGLRSIHAHVGEAYGRVRLGIGHPGHKDAVAPYVLSDFAKADQDWLADLLRGISDGAEALARGDGAKFQNAVALRMQPPKPEKPKPAAKAPEAQAPEAAPDERSALQKLADRFR.

Residue tyrosine 14 coordinates tRNA. Histidine 19 functions as the Proton acceptor in the catalytic mechanism. Residues phenylalanine 64, asparagine 66, and asparagine 112 each coordinate tRNA. The segment at 184–225 is disordered; it reads ALRMQPPKPEKPKPAAKAPEAQAPEAAPDERSALQKLADRFR. Residues 198 to 209 are compositionally biased toward low complexity; it reads AAKAPEAQAPEA. Residues 211 to 225 are compositionally biased toward basic and acidic residues; sequence PDERSALQKLADRFR.

It belongs to the PTH family. As to quaternary structure, monomer.

It is found in the cytoplasm. The enzyme catalyses an N-acyl-L-alpha-aminoacyl-tRNA + H2O = an N-acyl-L-amino acid + a tRNA + H(+). Functionally, hydrolyzes ribosome-free peptidyl-tRNAs (with 1 or more amino acids incorporated), which drop off the ribosome during protein synthesis, or as a result of ribosome stalling. In terms of biological role, catalyzes the release of premature peptidyl moieties from peptidyl-tRNA molecules trapped in stalled 50S ribosomal subunits, and thus maintains levels of free tRNAs and 50S ribosomes. This chain is Peptidyl-tRNA hydrolase, found in Cereibacter sphaeroides (strain ATCC 17023 / DSM 158 / JCM 6121 / CCUG 31486 / LMG 2827 / NBRC 12203 / NCIMB 8253 / ATH 2.4.1.) (Rhodobacter sphaeroides).